The following is a 105-amino-acid chain: Antithrombin-III (105 aa).

Positions 1–17 (MHLFIGVSLRPLGHGIP) are cleaved as a signal peptide. The tract at residues 38-105 (ICIYRNPEKK…MRRTSSCRPS (68 aa)) is disordered. Positions 43–53 (NPEKKPQERRG) are enriched in basic and acidic residues.

It belongs to the serpin family. In terms of assembly, forms protease inhibiting heterodimer with TMPRSS7. In terms of tissue distribution, plasma.

The protein resides in the secreted. It is found in the extracellular space. Functionally, most important serine protease inhibitor in plasma that regulates the blood coagulation cascade. AT-III inhibits thrombin, matriptase-3/TMPRSS7, as well as factors IXa, Xa and XIa. Its inhibitory activity is greatly enhanced in the presence of heparin. This Gallus gallus (Chicken) protein is Antithrombin-III (SERPINC1).